The following is a 550-amino-acid chain: Medium/long-chain-fatty-acid--CoA/3-oxocholest-4-en-26-oate--CoA ligase (550 aa).

ATP is bound by residues threonine 178–lysine 186, aspartate 419, arginine 434, and lysine 525. A disordered region spans residues lysine 525 to alanine 550.

It belongs to the ATP-dependent AMP-binding enzyme family.

It carries out the reaction a medium-chain fatty acid + ATP + CoA = a medium-chain fatty acyl-CoA + AMP + diphosphate. The enzyme catalyses a long-chain fatty acid + ATP + CoA = a long-chain fatty acyl-CoA + AMP + diphosphate. The catalysed reaction is (25S)-3-oxocholest-4-en-26-oate + ATP + CoA = (25S)-3-oxocholest-4-en-26-oyl-CoA + AMP + diphosphate. It participates in lipid metabolism; fatty acid biosynthesis. It functions in the pathway steroid metabolism; cholesterol metabolism. In terms of biological role, catalyzes the activation of medium/long-chain fatty acids as acyl-coenzyme A (acyl-CoA), which are then transferred to the multifunctional polyketide synthase (PKS) type III for further chain extension. Also involved in the degradation of cholesterol via the degradation of the side chains of C-24 branched-chain sterols. Catalyzes the ATP-dependent CoA thioesterification of the sterol 3-oxocholest-4-en-26-oate to yield 3-oxocholest-4-en-26-oyl-CoA. The chain is Medium/long-chain-fatty-acid--CoA/3-oxocholest-4-en-26-oate--CoA ligase from Mycobacterium marinum (strain ATCC BAA-535 / M).